Reading from the N-terminus, the 259-residue chain is Phosphatidylglycerol--prolipoprotein diacylglyceryl transferase (259 aa).

4 helical membrane-spanning segments follow: residues 12–32, 46–66, 83–103, and 109–129; these read LSLH…VYLA, IIDF…IYYV, IWNG…VLFV, and VLNP…AQAI. Arg131 provides a ligand contact to a 1,2-diacyl-sn-glycero-3-phospho-(1'-sn-glycerol). 3 helical membrane-spanning segments follow: residues 167–187, 194–214, and 226–246; these read VPTF…IMVW, LLDG…RLVI, and GIRV…VFIF.

The protein belongs to the Lgt family.

It is found in the cell membrane. The enzyme catalyses L-cysteinyl-[prolipoprotein] + a 1,2-diacyl-sn-glycero-3-phospho-(1'-sn-glycerol) = an S-1,2-diacyl-sn-glyceryl-L-cysteinyl-[prolipoprotein] + sn-glycerol 1-phosphate + H(+). It participates in protein modification; lipoprotein biosynthesis (diacylglyceryl transfer). Catalyzes the transfer of the diacylglyceryl group from phosphatidylglycerol to the sulfhydryl group of the N-terminal cysteine of a prolipoprotein, the first step in the formation of mature lipoproteins. The sequence is that of Phosphatidylglycerol--prolipoprotein diacylglyceryl transferase from Streptococcus equi subsp. zooepidemicus (strain MGCS10565).